A 320-amino-acid polypeptide reads, in one-letter code: Small ribosomal subunit protein uS2 (320 aa).

Positions methionine 1 to alanine 22 are enriched in acidic residues. Residues methionine 1 to arginine 83 form a disordered region. Low complexity predominate over residues aspartate 27–aspartate 41. 2 stretches are compositionally biased toward acidic residues: residues threonine 42–proline 57 and aspartate 65–glutamate 78.

This sequence belongs to the universal ribosomal protein uS2 family.

The protein is Small ribosomal subunit protein uS2 of Salinibacter ruber (strain DSM 13855 / M31).